The chain runs to 604 residues: Prostaglandin G/H synthase 2 (604 aa).

An N-terminal signal peptide occupies residues 1 to 17 (MLARALLLCAALALGQA). The region spanning 18-55 (ANPCCSNPCQNRGECLSVGFDRYKCDCTRTGYYGENCT) is the EGF-like domain. 4 disulfide bridges follow: cysteine 21–cysteine 32, cysteine 22–cysteine 145, cysteine 26–cysteine 42, and cysteine 44–cysteine 54. Asparagine 53 carries N-linked (GlcNAc...) asparagine glycosylation. Arginine 106 contributes to the substrate binding site. Asparagine 130 is a glycosylation site (N-linked (GlcNAc...) asparagine). The active-site Proton acceptor is the histidine 193. Residue tyrosine 341 participates in substrate binding. Tyrosine 371 acts as the For cyclooxygenase activity in catalysis. Position 374 (histidine 374) interacts with heme b. Asparagine 396 carries N-linked (GlcNAc...) asparagine glycosylation. Residue cysteine 526 is modified to S-nitrosocysteine. Cysteine 555 and cysteine 561 are oxidised to a cystine. Asparagine 580 carries N-linked (GlcNAc...) asparagine glycosylation.

This sequence belongs to the prostaglandin G/H synthase family. Homodimer. Heme b serves as cofactor. In terms of processing, S-nitrosylation by NOS2 (iNOS) activates enzyme activity. S-nitrosylation may take place on different Cys residues in addition to Cys-526.

The protein resides in the microsome membrane. Its subcellular location is the endoplasmic reticulum membrane. It is found in the nucleus inner membrane. The protein localises to the nucleus outer membrane. The catalysed reaction is (5Z,8Z,11Z,14Z)-eicosatetraenoate + AH2 + 2 O2 = prostaglandin H2 + A + H2O. The enzyme catalyses (5Z,8Z,11Z,14Z)-eicosatetraenoate + 2 O2 = prostaglandin G2. It catalyses the reaction prostaglandin G2 + AH2 = prostaglandin H2 + A + H2O. It carries out the reaction (5Z,8Z,11Z,14Z,17Z)-eicosapentaenoate + 2 O2 = prostaglandin G3. The catalysed reaction is prostaglandin G3 + AH2 = prostaglandin H3 + A + H2O. The enzyme catalyses (8Z,11Z,14Z)-eicosatrienoate + 2 O2 = prostaglandin G1. It catalyses the reaction prostaglandin G1 + AH2 = prostaglandin H1 + A + H2O. It carries out the reaction 2-(5Z,8Z,11Z,14Z)-eicosatetraenoyl-sn-glycero-3-phosphoethanolamine + 2 O2 = 2-(prostaglandin G2)-sn-glycero-3-phosphoethanolamine. The catalysed reaction is 2-(prostaglandin G2)-sn-glycero-3-phosphoethanolamine + AH2 = 2-(prostaglandin H2)-sn-glycero-3-phosphoethanolamine + A + H2O. The enzyme catalyses 2-(5Z,8Z,11Z,14Z)-eicosatetraenoyl-sn-glycero-3-phosphocholine + 2 O2 = 2-(prostaglandin G2)-sn-glycero-3-phosphocholine. It catalyses the reaction 2-(prostaglandin G2)-sn-glycero-3-phosphocholine + AH2 = 2-(prostaglandin H2)-sn-glycero-3-phosphocholine + A + H2O. It carries out the reaction (15S)-hydroperoxy-(5Z,8Z,11Z,13E)-eicosatetraenoate + AH2 = (15S)-hydroxy-(5Z,8Z,11Z,13E)-eicosatetraenoate + A + H2O. The catalysed reaction is 2-(5Z,8Z,11Z,14Z)-eicosatetraenoyl-sn-glycero-3-phosphocholine + AH2 + O2 = 2-[(15S)-hydroxy-(5Z,8Z,11Z,13E)-eicosatetraenoyl]-sn-glycero-3-phosphocholine + A + H2O. The enzyme catalyses 2-(5Z,8Z,11Z,14Z)-eicosatetraenoyl-sn-glycero-3-phosphocholine + AH2 + O2 = 2-[(15R)-hydroxy-(5Z,8Z,11Z,13E)-eicosatetraenoyl]-sn-glycero-3-phosphocholine + A + H2O. It catalyses the reaction 2-(5Z,8Z,11Z,14Z)-eicosatetraenoyl-sn-glycero-3-phosphocholine + AH2 + O2 = 2-[(11R)-hydroxy-(5Z,8Z,12E,14Z)-eicosatetraenoyl]-sn-glycero-3-phosphocholine + A + H2O. It carries out the reaction (9Z,12Z)-octadecadienoate + AH2 + O2 = 9-hydroxy-(10E,12Z)-octadecadienoate + A + H2O. The catalysed reaction is (9Z,12Z)-octadecadienoate + AH2 + O2 = 13-hydroxy-(9Z,11E)-octadecadienoate + A + H2O. The enzyme catalyses (5Z,8Z,11Z,14Z)-eicosatetraenoate + AH2 + O2 = (15R)-hydroxy-(5Z,8Z,11Z,13E)-eicosatetraenoate + A + H2O. It catalyses the reaction (5Z,8Z,11Z,14Z)-eicosatetraenoate + AH2 + O2 = (11R)-hydroxy-(5Z,8Z,12E,14Z)-eicosatetraenoate + A + H2O. It carries out the reaction (5Z,8Z,11Z,14Z,17Z)-eicosapentaenoate + AH2 + O2 = (11R)-hydroxy-(5Z,8Z,12E,14Z,17Z)-eicosapentaenoate + A + H2O. The catalysed reaction is (5Z,8Z,11Z,14Z,17Z)-eicosapentaenoate + AH2 + O2 = (18S)-hydroxy-(5Z,8Z,11Z,14Z,16E)-eicosapentaenoate + A + H2O. The enzyme catalyses (5Z,8Z,11Z,14Z,17Z)-eicosapentaenoate + AH2 + O2 = (18R)-hydroxy-(5Z,8Z,11Z,14Z,16E)-eicosapentaenoate + A + H2O. It catalyses the reaction (5Z,8Z,11Z,14Z,17Z)-eicosapentaenoate + AH2 + O2 = (15R)-hydroxy-(5Z,8Z,11Z,13E,17Z)-eicosapentaenoate + A + H2O. It carries out the reaction (5Z,8Z,11Z,14Z,17Z)-eicosapentaenoate + AH2 + O2 = (15S)-hydroxy-(5Z,8Z,11Z,13E,17Z)-eicosapentaenoate + A + H2O. The catalysed reaction is (7Z,10Z,13Z,16Z,19Z)-docosapentaenoate + AH2 + O2 = 13R-hydroxy-(7Z,10Z,14E,16Z,19Z)-docosapentaenoate + A + H2O. The enzyme catalyses (4Z,7Z,10Z,13Z,16Z,19Z)-docosahexaenoate + AH2 + O2 = 13-hydroxy-(4Z,7Z,10Z,14E,16Z,19Z)-docosahexaenoate + A + H2O. It catalyses the reaction (5S)-hydroxy-(6E,8Z,11Z,14Z)-eicosatetraenoate + AH2 + O2 = (5S,15R)-dihydroxy-(6E,8Z,11Z,13E)-eicosatetraenoate + A + H2O. It carries out the reaction (4Z,7Z,10Z,13Z,16Z,19Z)-docosahexaenoate + AH2 + O2 = 17R-hydroxy-(4Z,7Z,10Z,13Z,15E,19Z)-docosahexaenoate + A + H2O. The catalysed reaction is (5S)-hydroxy-(6E,8Z,11Z,14Z)-eicosatetraenoate + AH2 + O2 = (5S,15S)-dihydroxy-(6E,8Z,11Z,13E)-eicosatetraenoate + A + H2O. The enzyme catalyses (5S)-hydroxy-(6E,8Z,11Z,14Z)-eicosatetraenoate + AH2 + O2 = (5S,11R)-dihydroxy-(6E,8Z,12E,14Z)-eicosatetraenoate + A + H2O. It catalyses the reaction 2-(5Z,8Z,11Z,14Z-eicosatetraenoyl)-glycerol + 2 O2 = 2-glyceryl-prostaglandin G2. It carries out the reaction 2-glyceryl-prostaglandin G2 + AH2 = 2-glyceryl-prostaglandin H2 + A + H2O. The catalysed reaction is (5Z,8Z,11Z,14Z)-eicosatetraenoate + O2 = (15R)-hydroperoxy-(5Z,8Z,11Z,13E)-eicosatetraenoate. The enzyme catalyses (5Z,8Z,11Z,14Z)-eicosatetraenoate + O2 = 11R-hydroperoxy-(5Z,8Z,12E,14Z)-eicosatetraenoate. It catalyses the reaction (9Z,12Z)-octadecadienoate + AH2 + O2 = (9R)-hydroxy-(10E,12Z)-octadecadienoate + A + H2O. It carries out the reaction (9Z,12Z)-octadecadienoate + AH2 + O2 = (9S)-hydroxy-(10E,12Z)-octadecadienoate + A + H2O. The catalysed reaction is (9Z,12Z)-octadecadienoate + AH2 + O2 = (13S)-hydroxy-(9Z,11E)-octadecadienoate + A + H2O. The enzyme catalyses (9Z,12Z)-octadecadienoate + AH2 + O2 = (13R)-hydroxy-(9Z,11E)-octadecadienoate + A + H2O. Its pathway is lipid metabolism; prostaglandin biosynthesis. In terms of biological role, dual cyclooxygenase and peroxidase in the biosynthesis pathway of prostanoids, a class of C20 oxylipins mainly derived from arachidonate ((5Z,8Z,11Z,14Z)-eicosatetraenoate, AA, C20:4(n-6)), with a particular role in the inflammatory response. The cyclooxygenase activity oxygenates AA to the hydroperoxy endoperoxide prostaglandin G2 (PGG2), and the peroxidase activity reduces PGG2 to the hydroxy endoperoxide prostaglandin H2 (PGH2), the precursor of all 2-series prostaglandins and thromboxanes. This complex transformation is initiated by abstraction of hydrogen at carbon 13 (with S-stereochemistry), followed by insertion of molecular O2 to form the endoperoxide bridge between carbon 9 and 11 that defines prostaglandins. The insertion of a second molecule of O2 (bis-oxygenase activity) yields a hydroperoxy group in PGG2 that is then reduced to PGH2 by two electrons. Similarly catalyzes successive cyclooxygenation and peroxidation of dihomo-gamma-linoleate (DGLA, C20:3(n-6)) and eicosapentaenoate (EPA, C20:5(n-3)) to corresponding PGH1 and PGH3, the precursors of 1- and 3-series prostaglandins. In an alternative pathway of prostanoid biosynthesis, converts 2-arachidonoyl lysophopholipids to prostanoid lysophopholipids, which are then hydrolyzed by intracellular phospholipases to release free prostanoids. Metabolizes 2-arachidonoyl glycerol yielding the glyceryl ester of PGH2, a process that can contribute to pain response. Generates lipid mediators from n-3 and n-6 polyunsaturated fatty acids (PUFAs) via a lipoxygenase-type mechanism. Oxygenates PUFAs to hydroperoxy compounds and then reduces them to corresponding alcohols. Plays a role in the generation of resolution phase interaction products (resolvins) during both sterile and infectious inflammation. Metabolizes docosahexaenoate (DHA, C22:6(n-3)) to 17R-HDHA, a precursor of the D-series resolvins (RvDs). As a component of the biosynthetic pathway of E-series resolvins (RvEs), converts eicosapentaenoate (EPA, C20:5(n-3)) primarily to 18S-HEPE that is further metabolized by ALOX5 and LTA4H to generate 18S-RvE1 and 18S-RvE2. In vascular endothelial cells, converts docosapentaenoate (DPA, C22:5(n-3)) to 13R-HDPA, a precursor for 13-series resolvins (RvTs) shown to activate macrophage phagocytosis during bacterial infection. In activated leukocytes, contributes to oxygenation of hydroxyeicosatetraenoates (HETE) to diHETES (5,15-diHETE and 5,11-diHETE). Can also use linoleate (LA, (9Z,12Z)-octadecadienoate, C18:2(n-6)) as substrate and produce hydroxyoctadecadienoates (HODEs) in a regio- and stereospecific manner, being (9R)-HODE ((9R)-hydroxy-(10E,12Z)-octadecadienoate) and (13S)-HODE ((13S)-hydroxy-(9Z,11E)-octadecadienoate) its major products. During neuroinflammation, plays a role in neuronal secretion of specialized preresolving mediators (SPMs) 15R-lipoxin A4 that regulates phagocytic microglia. The polypeptide is Prostaglandin G/H synthase 2 (PTGS2) (Cavia porcellus (Guinea pig)).